A 325-amino-acid chain; its full sequence is MANQKLPTLKYTGKSESAVPIVSESELQTVTAEPWVKISDKGLQLEGLNFNREGQLFLLDVFEGNIFKVNPATKEVTTKFQSVKDNPAAIKVHKDGRLFICYLGDFKTTGGIFATTEKGEQIEEIISDLNTEYCIDDMVFDSKGGFYFTDFRGYSTQPLGGVYYVDPDFKTVTPIIQNISVANGIALSTDEKVLWVTETTTNRLHRIALENDGVTIAPFGATIPYYFTGHEGPDSCCIDSDDNLYVAMYGQGRVLVFNKRGYPIGQILMPGRDDGKMLRTTHPQFIPGTNQLIICTNDIENHSEGGSMLYTVNGFAKGYESYQFQ.

The Ca(2+) site is built by glutamate 46, threonine 108, glycine 110, aspartate 128, threonine 131, tyrosine 133, aspartate 136, asparagine 183, aspartate 234, and serine 235. The active-site Proton donor is aspartate 234.

This sequence belongs to the SMP-30/CGR1 family. Ca(2+) is required as a cofactor.

The protein resides in the cytoplasm. Functionally, exhibits lactonase activity. Acts in cells with perturbed membrane integrity and is possibly related to the membrane homeostasis. The chain is Lactonase drp35 (drp35) from Staphylococcus epidermidis (strain ATCC 12228 / FDA PCI 1200).